A 547-amino-acid polypeptide reads, in one-letter code: Sterol carrier protein 2 (547 aa).

Ser-3 carries the post-translational modification Phosphoserine. Lys-132 is modified (N6-acetyllysine; alternate). Lys-132 is subject to N6-succinyllysine; alternate. At Lys-168 the chain carries N6-succinyllysine. 2 positions are modified to N6-acetyllysine: Lys-173 and Lys-177. Lys-183 carries the N6-acetyllysine; alternate modification. Lys-183 is modified (N6-succinyllysine; alternate). Lys-282 is subject to N6-succinyllysine. 5 positions are modified to N6-acetyllysine; alternate: Lys-341, Lys-432, Lys-438, Lys-443, and Lys-453. N6-succinyllysine; alternate occurs at positions 341, 432, 438, 443, and 453. In terms of domain architecture, SCP2 spans 433 to 543 (ANLVFKEIEK…KLQNLQLQPG (111 aa)). Residue Lys-464 is modified to N6-succinyllysine. Lys-470 carries the post-translational modification N6-acetyllysine; alternate. The residue at position 470 (Lys-470) is an N6-succinyllysine; alternate. Residue Lys-479 is modified to N6-succinyllysine. Lys-491 is modified (N6-acetyllysine). Lys-492 and Lys-511 each carry N6-succinyllysine. Ser-516 is subject to Phosphoserine. N6-succinyllysine is present on residues Lys-522 and Lys-534. Positions 545-547 (AKL) match the Microbody targeting signal motif.

It in the N-terminal section; belongs to the thiolase-like superfamily. Thiolase family. In terms of assembly, interacts with PEX5; the interaction is essential for peroxisomal import. PreSCP2, a protein with a molecular mass of about 15 kDa, is processed into its mature form (SCP2) by proteolytic cleavage of a 20 residue leader sequence after translocation into peroxisomes. Liver, fibroblasts, and placenta.

The protein localises to the peroxisome. It localises to the cytoplasm. It is found in the mitochondrion. Its subcellular location is the endoplasmic reticulum. It catalyses the reaction choloyl-CoA + propanoyl-CoA = 3alpha,7alpha,12alpha-trihydroxy-24-oxo-5beta-cholestan-26-oyl-CoA + CoA. It carries out the reaction 4,8,12-trimethyltridecanoyl-CoA + propanoyl-CoA = 3-oxopristanoyl-CoA + CoA. The catalysed reaction is an acyl-CoA + acetyl-CoA = a 3-oxoacyl-CoA + CoA. The enzyme catalyses hexanoyl-CoA + acetyl-CoA = 3-oxooctanoyl-CoA + CoA. It catalyses the reaction tetradecanoyl-CoA + acetyl-CoA = 3-oxohexadecanoyl-CoA + CoA. It carries out the reaction 3-oxohexadecanedioyl-CoA + CoA = tetradecanedioyl-CoA + acetyl-CoA. The catalysed reaction is propanoyl-CoA + tetradecanoyl-CoA = 3-oxo-2-methylhexadecanoyl-CoA + CoA. The enzyme catalyses butanoyl-CoA + acetyl-CoA = 3-oxohexanoyl-CoA + CoA. It catalyses the reaction octanoyl-CoA + acetyl-CoA = 3-oxodecanoyl-CoA + CoA. It carries out the reaction decanoyl-CoA + acetyl-CoA = 3-oxododecanoyl-CoA + CoA. The catalysed reaction is dodecanoyl-CoA + acetyl-CoA = 3-oxotetradecanoyl-CoA + CoA. The enzyme catalyses hexadecanoyl-CoA + acetyl-CoA = 3-oxooctadecanoyl-CoA + CoA. It catalyses the reaction 3-oxo-(9Z-octadecenoyl)-CoA + CoA = (7Z)-hexadecenoyl-CoA + acetyl-CoA. It carries out the reaction 7-dehydrocholesterol(in) = 7-dehydrocholesterol(out). Functionally, plays a crucial role in the peroxisomal oxidation of branched-chain fatty acids. Catalyzes the last step of the peroxisomal beta-oxidation of branched chain fatty acids and the side chain of the bile acid intermediates di- and trihydroxycoprostanic acids (DHCA and THCA). Also active with medium and long straight chain 3-oxoacyl-CoAs. Stimulates the microsomal conversion of 7-dehydrocholesterol to cholesterol and transfers phosphatidylcholine and 7-dehydrocholesterol between membrances, in vitro. Isoforms SCP2 and SCPx cooperate in peroxisomal oxidation of certain naturally occurring tetramethyl-branched fatty acyl-CoAs. In terms of biological role, mediates the transfer of all common phospholipids, cholesterol and gangliosides from the endoplasmic reticulum to the plasma membrane. May play a role in regulating steroidogenesis. Stimulates the microsomal conversion of 7-dehydrocholesterol to cholesterol. Also binds fatty acids and fatty acyl Coenzyme A (CoA) such as phytanoyl-CoA. Involved in the regulation phospholipid synthesis in endoplasmic reticulum enhancing the incorporation of exogenous fatty acid into glycerides. Seems to stimulate the rate-limiting step in phosphatidic acid formation mediated by GPAT3. Isoforms SCP2 and SCPx cooperate in peroxisomal oxidation of certain naturally occurring tetramethyl-branched fatty acyl-CoAs. The chain is Sterol carrier protein 2 from Homo sapiens (Human).